The chain runs to 616 residues: Dihydroxy-acid dehydratase (616 aa).

Asp-81 lines the Mg(2+) pocket. Position 122 (Cys-122) interacts with [2Fe-2S] cluster. 2 residues coordinate Mg(2+): Asp-123 and Lys-124. N6-carboxylysine is present on Lys-124. A [2Fe-2S] cluster-binding site is contributed by Cys-195. Mg(2+) is bound at residue Glu-491. The Proton acceptor role is filled by Ser-517.

Belongs to the IlvD/Edd family. Homodimer. The cofactor is [2Fe-2S] cluster. It depends on Mg(2+) as a cofactor.

The enzyme catalyses (2R)-2,3-dihydroxy-3-methylbutanoate = 3-methyl-2-oxobutanoate + H2O. It carries out the reaction (2R,3R)-2,3-dihydroxy-3-methylpentanoate = (S)-3-methyl-2-oxopentanoate + H2O. Its pathway is amino-acid biosynthesis; L-isoleucine biosynthesis; L-isoleucine from 2-oxobutanoate: step 3/4. It functions in the pathway amino-acid biosynthesis; L-valine biosynthesis; L-valine from pyruvate: step 3/4. Functionally, functions in the biosynthesis of branched-chain amino acids. Catalyzes the dehydration of (2R,3R)-2,3-dihydroxy-3-methylpentanoate (2,3-dihydroxy-3-methylvalerate) into 2-oxo-3-methylpentanoate (2-oxo-3-methylvalerate) and of (2R)-2,3-dihydroxy-3-methylbutanoate (2,3-dihydroxyisovalerate) into 2-oxo-3-methylbutanoate (2-oxoisovalerate), the penultimate precursor to L-isoleucine and L-valine, respectively. The polypeptide is Dihydroxy-acid dehydratase (Escherichia coli O157:H7 (strain EC4115 / EHEC)).